Consider the following 135-residue polypeptide: Interleukin-5 (135 aa).

An N-terminal signal peptide occupies residues 1-19 (MRVLLQLGLLALGAVCVCA). N-linked (GlcNAc...) asparagine glycosylation is found at N48, N77, and N91.

This sequence belongs to the IL-5 family. In terms of assembly, homodimer; disulfide-linked. Interacts with IL5RA. Interacts with CSF2RB.

It localises to the secreted. In terms of biological role, homodimeric cytokine expressed predominantly by T-lymphocytes and NK cells that plays an important role in the survival, differentiation, and chemotaxis of eosinophils. Also acts on activated and resting B-cells to induce immunoglobulin production, growth, and differentiation. Mechanistically, exerts its biological effects through a receptor composed of IL5RA subunit and the cytokine receptor common subunit beta/CSF2RB. Binding to the receptor leads to activation of various kinases including LYN, SYK and JAK2 and thereby propagates signals through the RAS-MAPK and JAK-STAT5 pathways respectively. The chain is Interleukin-5 (IL5) from Cavia porcellus (Guinea pig).